A 348-amino-acid chain; its full sequence is Dihydroorotase (348 aa).

Residues H17 and H19 each coordinate Zn(2+). Substrate is bound by residues 19–21 and N45; that span reads HLR. Zn(2+) contacts are provided by K103, H140, and H178. N6-carboxylysine is present on K103. H140 serves as a coordination point for substrate. Position 223 (L223) interacts with substrate. D251 provides a ligand contact to Zn(2+). D251 is a catalytic residue. Substrate contacts are provided by H255 and A267.

It belongs to the metallo-dependent hydrolases superfamily. DHOase family. Class II DHOase subfamily. Homodimer. It depends on Zn(2+) as a cofactor.

It catalyses the reaction (S)-dihydroorotate + H2O = N-carbamoyl-L-aspartate + H(+). It functions in the pathway pyrimidine metabolism; UMP biosynthesis via de novo pathway; (S)-dihydroorotate from bicarbonate: step 3/3. Its function is as follows. Catalyzes the reversible cyclization of carbamoyl aspartate to dihydroorotate. The sequence is that of Dihydroorotase from Escherichia coli O157:H7.